Here is a 387-residue protein sequence, read N- to C-terminus: EARP-interacting protein homolog (387 aa).

4 WD repeats span residues 132-172 (SAHG…AKAT), 182-222 (KGQL…QIYC), 226-266 (AHGQ…EPVK), and 270-310 (EHSH…SEPF). The disordered stretch occupies residues 309 to 337 (PFGHLVDDDDLSDPEENQQEDKGKEPLQD). Residues 315 to 326 (DDDDLSDPEENQ) are compositionally biased toward acidic residues. The stretch at 345-385 (EHEDSVYAVEWSAADPWLFASLSYDGRLVINRVPRALKYRI) is one WD 5 repeat.

This sequence belongs to the WD repeat EIPR1 family.

Its subcellular location is the golgi apparatus. The protein resides in the trans-Golgi network. May act as a component of endosomal retrieval machinery that is involved in protein transport from early endosomes to either recycling endosomes or the trans-Golgi network. This Danio rerio (Zebrafish) protein is EARP-interacting protein homolog.